A 332-amino-acid chain; its full sequence is Heptahelical transmembrane protein 1 (332 aa).

Positions 1–52 (MDQNGHNDEAETVSCGNGNCKSKIVPGDDHGGDESSGTKRRKKRKTQQKTMK) are disordered. Residues 1–98 (MDQNGHNDEA…VFSFHNESLN (98 aa)) are Cytoplasmic-facing. The segment covering 26–37 (PGDDHGGDESSG) has biased composition (basic and acidic residues). Residues 38-52 (TKRRKKRKTQQKTMK) show a composition bias toward basic residues. The helical transmembrane segment at 99–119 (VWTHLIGFIFFVALTVANIIH) threads the bilayer. Topologically, residues 120–138 (HDGFFPVDAKSPGNVTRWP) are extracellular. Residues 139 to 159 (FFVFLGGSMFCLLASSICHLF) form a helical membrane-spanning segment. Residues 160–172 (CCHSKELNVFLLR) are Cytoplasmic-facing. The chain crosses the membrane as a helical span at residues 173 to 193 (IDYAGITAMIITSFFPPIFYI). At 194 to 199 (FQCTPR) the chain is on the extracellular side. Residues 200 to 220 (WYFIYLAGITSMGIFTIITLF) traverse the membrane as a helical segment. Over 221-233 (TPSLSAPKYRAFR) the chain is Cytoplasmic. A helical transmembrane segment spans residues 234–254 (ALLFASMGLFGIVPAAHALVV). Over 255 to 262 (NWGNPQRN) the chain is Extracellular. The helical transmembrane segment at 263–283 (VTLVYELLMAVFYLVGTGFYV) threads the bilayer. At 284–303 (GRVPERLKPGWFDRVGHSHQ) the chain is on the cytoplasmic side. A helical membrane pass occupies residues 304–324 (IFHVFVLLGALSHYAAALLFL). Residues 325-332 (DWRDHVGC) lie on the Extracellular side of the membrane.

This sequence belongs to the ADIPOR family. In terms of assembly, interacts (via N-terminus) with SCRM/ICE1. As to expression, expressed in roots, hypocotyls, vasculature of cotyledons and leaves, hydathodes and guard cells. In reproductive organs, expressed in trichomes, veins of sepals, stamens and stigmata of pistils.

It is found in the membrane. Its function is as follows. May act as a negative regulator of abscisic acid (ABA)-mediated osmotic stress signaling and function in cross-talk between cold and osmotic signaling. The polypeptide is Heptahelical transmembrane protein 1 (HHP1) (Arabidopsis thaliana (Mouse-ear cress)).